A 179-amino-acid chain; its full sequence is Large ribosomal subunit protein uL5 (179 aa).

The protein belongs to the universal ribosomal protein uL5 family. In terms of assembly, part of the 50S ribosomal subunit; part of the 5S rRNA/L5/L18/L25 subcomplex. Contacts the 5S rRNA and the P site tRNA. Forms a bridge to the 30S subunit in the 70S ribosome.

This is one of the proteins that bind and probably mediate the attachment of the 5S RNA into the large ribosomal subunit, where it forms part of the central protuberance. In the 70S ribosome it contacts protein S13 of the 30S subunit (bridge B1b), connecting the 2 subunits; this bridge is implicated in subunit movement. Contacts the P site tRNA; the 5S rRNA and some of its associated proteins might help stabilize positioning of ribosome-bound tRNAs. The sequence is that of Large ribosomal subunit protein uL5 from Xylella fastidiosa (strain 9a5c).